Consider the following 185-residue polypeptide: UPF0149 protein PD_0802 (185 aa).

This sequence belongs to the UPF0149 family.

This Xylella fastidiosa (strain Temecula1 / ATCC 700964) protein is UPF0149 protein PD_0802.